Here is a 553-residue protein sequence, read N- to C-terminus: Efflux pump alnA (553 aa).

Positions 1–21 (MSSDDTVKQEHSCSADSEKQD) are enriched in basic and acidic residues. Positions 1 to 36 (MSSDDTVKQEHSCSADSEKQDSSCASDNEQPKEPQS) are disordered. A run of 13 helical transmembrane segments spans residues 40-60 (IHGL…FLFA), 85-105 (WSGV…LQIF), 110-130 (IKWM…ICGA), 136-156 (MLIG…VGVM), 174-194 (AMGL…GAFT), 202-222 (WSFY…IFLL), 243-263 (LVGT…INFA), 270-290 (SEPG…VFGI), 319-339 (LLFV…YVIP), 355-375 (VRLL…GYLA), 382-402 (IPWY…MYTI), 413-433 (GYSS…HAVA), and 522-542 (TYIL…GMKW).

The protein belongs to the major facilitator superfamily. TCR/Tet family.

The protein resides in the cell membrane. Functionally, efflux pump; part of the gene cluster that mediates the biosynthesis of asperlin, a polyketide showing anti-inflammatory, antitumor and antibiotic activities. Is probably involved in the efflux of asperlin. The polypeptide is Efflux pump alnA (Emericella nidulans (strain FGSC A4 / ATCC 38163 / CBS 112.46 / NRRL 194 / M139) (Aspergillus nidulans)).